We begin with the raw amino-acid sequence, 926 residues long: MSDLEAEYRLDYFEEEGFERKECPSCGAHFWTRDADRELCGEPPCEDYSFIDDPGFPEAYSLSEMREAFLSFFEEHGHERIDPYPVAANRWRDDVLLTQASIYDFQPLVTSGQTPPPANPLTISQPCIRMQDIDNVGKTGRHTMAFEMMAHHAFNTREEVAEDEYAYHGEVYWKDETVEYCDKLFESLGADLEDITYIEDPWVGGGNAGPAIEVIYKGAELATLVFMCMERDPDGDYEMKDGHTYSFMDTYIVDTGYGLERWTWMSQGTATVYEAVYPDAIDFLKENAGIEHTEAEQKLVHRAAKLSGRLDIDDVDDVEAARGEIADRLDVDVNRLRELVEPLESIYAIADHSRTLAYMFGDGIVPSNVGTGYLARMVLRRTKRLVDEIGIDAPLDELVDMQAERLGYENRDTIREIVRTEERKYRKTLERGSRKVESLADEYAGTDEPIPTEVLLELYDSHGIQPDMVADIAAERGATVDVPDDFYALVADRHEEADGDEAAAERDDRFDDLPETEKLFYDDQGRTEFEAVVLDVFELEEGYDVVLDQTMFYPEGGGQPADRGQLTAGETTVDVVDVQERNGVVLHRTDADPGKGEFVRGQVDGDRRDRLRAHHTATHLIGHAAREVLGNHVRQAGAQKGIDSSRLDIRHFERITREQVKEIERVANALVRDDVPVRQEWPDRNEAESEHGFDLYQGGVPPGTNIRLIHVGDEDVQACAGTHVERTGEIGAVKVLKTEPVQDGVERIVFAAGGAAVEATQRTEDALYDAARALDVDPLDVPETAERFFEEWKGRGKEIESLKEELAAARASGGADAEEVEIGGVTAVIQRLDGDADELRATANAHVDDGKVAVVGSGADGSASFVVGVPDGVDVNAGQVVSELAARVGGGGGGPPDFAQGGGPDADALDDALDAAPDVLRSLQEA.

Histidine 615, histidine 619, cysteine 719, and histidine 723 together coordinate Zn(2+). A disordered region spans residues 887–910; that stretch reads RVGGGGGGPPDFAQGGGPDADALD. Residues 888 to 904 are compositionally biased toward gly residues; that stretch reads VGGGGGGPPDFAQGGGP.

The protein belongs to the class-II aminoacyl-tRNA synthetase family. Zn(2+) serves as cofactor.

It localises to the cytoplasm. The catalysed reaction is tRNA(Ala) + L-alanine + ATP = L-alanyl-tRNA(Ala) + AMP + diphosphate. Functionally, catalyzes the attachment of alanine to tRNA(Ala) in a two-step reaction: alanine is first activated by ATP to form Ala-AMP and then transferred to the acceptor end of tRNA(Ala). Also edits incorrectly charged Ser-tRNA(Ala) and Gly-tRNA(Ala) via its editing domain. In Halorubrum lacusprofundi (strain ATCC 49239 / DSM 5036 / JCM 8891 / ACAM 34), this protein is Alanine--tRNA ligase.